A 132-amino-acid polypeptide reads, in one-letter code: Global transcriptional regulator Spx (132 aa).

C10 and C13 are joined by a disulfide.

The protein belongs to the ArsC family. Spx subfamily. As to quaternary structure, interacts with the C-terminal domain of the alpha subunit of the RNAP.

Its subcellular location is the cytoplasm. Its function is as follows. Global transcriptional regulator that plays a key role in stress response and exerts either positive or negative regulation of genes. Acts by interacting with the C-terminal domain of the alpha subunit of the RNA polymerase (RNAP). This interaction can enhance binding of RNAP to the promoter region of target genes and stimulate their transcription, or block interaction of RNAP with activator. The chain is Global transcriptional regulator Spx from Enterococcus faecalis (strain ATCC 700802 / V583).